Consider the following 601-residue polypeptide: MEGSDFLLAGVLFLFAAVAAVPLASRLGIGAVLGYLLAGIAIGPWGLGFISDVDEILHFSELGVVFLMFIIGLELNPSKLWQLRRSIFGVGAAQVLLSSALLAGLLMLTHFSWQAAVVGGIGLAMSSTAMALQLMREKGMNRSESGQLGFSVLLFQDLAVIPALALVPLLAGSADEHFDWMKIGMKVLAFVGMLIGGRYLLRPVFRFIAASGVREVFTAATLLLVLGSALFMDALGLSMALGTFIAGVLLAESEYRHELETAIDPFKGLLLGLFFISVGMSLNLGVLYTHLLWVVISVVVLVAVKILVLYLLARLYGVRSSERMQFAGVLSQGGEFAFVLFSTASSQRLFQGDQMALLLVTVTLSMMTTPLLMKLVDKWLSRQFNGPEEEDEKPWVNDDKPQVIVVGFGRFGQVIGRLLMANKMRITVLERDISAVNLMRKYGYKVYYGDATQVDLLRSAGAEAAESIVITCNEPEDTMKLVEICQQHFPHLHILARARGRVEAHELLQAGVTQFSRETFSSALELGRKTLVTLGMHPHQAQRAQLHFRRLDMRMLRELIPMHADTVQISRAREARRELEEIFQREMQQERRQLDGWDEFE.

Transmembrane regions (helical) follow at residues 4 to 24 (SDFL…VPLA), 29 to 49 (IGAV…GLGF), 55 to 75 (EILH…GLEL), 87 to 107 (IFGV…GLLM), 115 to 135 (AAVV…LQLM), 152 to 172 (VLLF…LLAG), 177 to 197 (HFDW…LIGG), 207 to 227 (FIAA…LVLG), 230 to 250 (LFMD…GVLL), 268 to 288 (GLLL…GVLY), 291 to 311 (LLWV…VLYL), 324 to 344 (MQFA…FSTA), and 356 to 376 (ALLL…MKLV). An RCK N-terminal domain is found at 400–519 (KPQVIVVGFG…AGVTQFSRET (120 aa)).

It belongs to the monovalent cation:proton antiporter 2 (CPA2) transporter (TC 2.A.37) family. KefB subfamily. As to quaternary structure, interacts with the regulatory subunit KefG.

It is found in the cell inner membrane. Pore-forming subunit of a potassium efflux system that confers protection against electrophiles. Catalyzes K(+)/H(+) antiport. This chain is Glutathione-regulated potassium-efflux system protein KefB, found in Escherichia coli O81 (strain ED1a).